Reading from the N-terminus, the 409-residue chain is Argininosuccinate synthase (409 aa).

ATP-binding positions include 12–20 and Ala39; that span reads AYSGGLDTS. Tyr91 is an L-citrulline binding site. Residue Gly121 participates in ATP binding. Thr123, Asn127, and Asp128 together coordinate L-aspartate. Asn127 serves as a coordination point for L-citrulline. Residues Arg131, Ser180, Ser189, Glu265, and Tyr277 each coordinate L-citrulline.

Belongs to the argininosuccinate synthase family. Type 1 subfamily. As to quaternary structure, homotetramer.

The protein localises to the cytoplasm. It carries out the reaction L-citrulline + L-aspartate + ATP = 2-(N(omega)-L-arginino)succinate + AMP + diphosphate + H(+). It participates in amino-acid biosynthesis; L-arginine biosynthesis; L-arginine from L-ornithine and carbamoyl phosphate: step 2/3. This is Argininosuccinate synthase from Buchnera aphidicola subsp. Baizongia pistaciae (strain Bp).